The following is a 302-amino-acid chain: Enolase-phosphatase E1 (302 aa).

Basic residues predominate over residues 1 to 10 (MSDSRLRRRQ). The disordered stretch occupies residues 1–25 (MSDSRLRRRQGTAGTDNKRRADGPH). The span at 16-25 (DNKRRADGPH) shows a compositional bias: basic and acidic residues. Mg(2+)-binding residues include Asp-40 and Glu-42. Substrate-binding positions include 183 to 184 (SS) and Lys-217. Asp-242 lines the Mg(2+) pocket.

Belongs to the HAD-like hydrolase superfamily. MasA/MtnC family. In terms of assembly, monomer. It depends on Mg(2+) as a cofactor.

Its subcellular location is the cytoplasm. The protein localises to the nucleus. It carries out the reaction 5-methylsulfanyl-2,3-dioxopentyl phosphate + H2O = 1,2-dihydroxy-5-(methylsulfanyl)pent-1-en-3-one + phosphate. The protein operates within amino-acid biosynthesis; L-methionine biosynthesis via salvage pathway; L-methionine from S-methyl-5-thio-alpha-D-ribose 1-phosphate: step 3/6. It participates in amino-acid biosynthesis; L-methionine biosynthesis via salvage pathway; L-methionine from S-methyl-5-thio-alpha-D-ribose 1-phosphate: step 4/6. Bifunctional enzyme that catalyzes the enolization of 2,3-diketo-5-methylthiopentyl-1-phosphate (DK-MTP-1-P) into the intermediate 2-hydroxy-3-keto-5-methylthiopentenyl-1-phosphate (HK-MTPenyl-1-P), which is then dephosphorylated to form the acireductone 1,2-dihydroxy-3-keto-5-methylthiopentene (DHK-MTPene). This is Enolase-phosphatase E1 from Branchiostoma floridae (Florida lancelet).